The chain runs to 189 residues: ATP synthase subunit b (189 aa).

The helical transmembrane segment at 23-43 (IEIVLSLVVFGLLLFAVWKFV) threads the bilayer.

The protein belongs to the ATPase B chain family. In terms of assembly, F-type ATPases have 2 components, F(1) - the catalytic core - and F(0) - the membrane proton channel. F(1) has five subunits: alpha(3), beta(3), gamma(1), delta(1), epsilon(1). F(0) has three main subunits: a(1), b(2) and c(10-14). The alpha and beta chains form an alternating ring which encloses part of the gamma chain. F(1) is attached to F(0) by a central stalk formed by the gamma and epsilon chains, while a peripheral stalk is formed by the delta and b chains.

It is found in the cell membrane. Its function is as follows. F(1)F(0) ATP synthase produces ATP from ADP in the presence of a proton or sodium gradient. F-type ATPases consist of two structural domains, F(1) containing the extramembraneous catalytic core and F(0) containing the membrane proton channel, linked together by a central stalk and a peripheral stalk. During catalysis, ATP synthesis in the catalytic domain of F(1) is coupled via a rotary mechanism of the central stalk subunits to proton translocation. In terms of biological role, component of the F(0) channel, it forms part of the peripheral stalk, linking F(1) to F(0). This Nocardioides sp. (strain ATCC BAA-499 / JS614) protein is ATP synthase subunit b.